The chain runs to 1036 residues: PDZ domain-containing RING finger protein 4 (1036 aa).

The segment at 18 to 56 (CKLCGQVLEEPLCTPCGHVFCASCLLPWAVRRRRCPLQC) adopts an RING-type; degenerate zinc-finger fold. A compositionally biased stretch (gly residues) spans 129–160 (ARGGCGPTPRAGRGGGARGGPPGGRWGRGRGP). The interval 129-161 (ARGGCGPTPRAGRGGGARGGPPGGRWGRGRGPG) is disordered. PDZ domains follow at residues 224–314 (TIVL…LRRT) and 402–486 (EVEL…VARP). Residues 515–590 (HNEAMQPTAN…SLKSKRDLGQ (76 aa)) are disordered. The segment covering 548–566 (NHEKDSGVGRTDESLRNDE) has biased composition (basic and acidic residues). Residues 655 to 689 (NQGEQEGVEHELQLLNEELRNIELECQNIMQAHRL) adopt a coiled-coil conformation. Over residues 726-735 (EHPEKSDKDS) the composition is skewed to basic and acidic residues. The disordered stretch occupies residues 726-819 (EHPEKSDKDS…VLEGSKLPDQ (94 aa)). Positions 736 to 750 (SSAYNTAESCRSTPL) are enriched in polar residues. Over residues 774–799 (STMAATQSSSGQSSKESTSTKAKTTE) the composition is skewed to low complexity. Basic and acidic residues predominate over residues 805-819 (ESKEKVLEGSKLPDQ).

This chain is PDZ domain-containing RING finger protein 4 (PDZRN4), found in Homo sapiens (Human).